We begin with the raw amino-acid sequence, 112 residues long: Putative membrane protein insertion efficiency factor (112 aa).

Belongs to the UPF0161 family.

Its subcellular location is the cell inner membrane. In terms of biological role, could be involved in insertion of integral membrane proteins into the membrane. The sequence is that of Putative membrane protein insertion efficiency factor from Bradyrhizobium diazoefficiens (strain JCM 10833 / BCRC 13528 / IAM 13628 / NBRC 14792 / USDA 110).